Here is a 1028-residue protein sequence, read N- to C-terminus: MPPRRDLKKILIIGSGPITIGQAAEFDYSGTQAVKALRGAGYRVVLVNSNPATIMTDPELAERTYIEPLDLEHLEGILAREAPDALLPTLGGQTGLNLAMALHEEGILQKYGVELIGAKAEAIRKGEDREAFQEAMQRIGLEVPRGQLVGSVEEGLHFAREVGFPVVVRPSFTLGGTGGGIAHDEAELVEVLSRGLTLSPVHTALVEESVLGWKEFELEVMRDHADTVVIITSIENVDPMGVHTGDSITVAPAQTLSDVEYQRMRDAAKAIIREIGVETGGSNIQFAVDPKTGRQVVIEMNPRVSRSSALASKATGFPIAKIAALLAVGYRLDELPNDITRKTPASFEPTIDYVVVKIPRFAFEKFRPLRNTLGELKDELTTQMKSVGEVMAIGRTFKEALMKALRGLERDVRALAGVRTEELEKKLYPNPDRVYAVMELLRRGMPVEELYQATRIDPWFLHQMKEVVEAEEWLKTHPPKDREDWRFYKGLGLTDRRIGELVGKGEKEVRAERKALGVVPVYKTVDTCAAEFEAYTPYHYSTYELEDEVWPSQKPKVVILGSGPIRIGQGVEFDYATVHAVWALKEAGYETIMVNSNPETVSTDYDTADRLYFEPLTLEDVLNIVEHEKPIGVIATLGGQTPLKLAKGLEEAGVRLLGTPFSAIHQAEDREAFHALCQRLGIPQPEGRVAQSPEEALRLAPEVGFPLLVRPSYVLGGRAMQVVRDEGELKRYLEEVYAPLEERPSILLDRFLEGAVELDVDALSDGQEVMVAGIMEHVERAGVHSGDSATLLPPVHVPEEALKKVRDYTRRLALALGVRGLLNVQYAVVGEEVYVLEANPRASRTVPFVSKAIGVPLAKLAALIAVGKTLKELGVRDLDPVPPYYAAKEVVIPWIKFPGVIPELGPEMRSTGESMGIDQDPYLAYYKAELGAGQRLPLSGRVRFIGEGLEDLKALYQEAGFALTEGEDYDLLISLVPDPELRRAVERGLPFITTREGAWWSLKAILRARESGLRVQSLQDWHQKAPRG.

The interval 1 to 409 (MPPRRDLKKI…ALMKALRGLE (409 aa)) is carboxyphosphate synthetic domain. ATP contacts are provided by Arg-129, Arg-169, Gly-175, Gly-176, Glu-208, Val-210, Glu-215, Gly-241, Val-242, His-243, Gln-285, and Glu-299. One can recognise an ATP-grasp 1 domain in the interval 133–328 (QEAMQRIGLE…IAKIAALLAV (196 aa)). Mg(2+) contacts are provided by Gln-285, Glu-299, and Asn-301. 3 residues coordinate Mn(2+): Gln-285, Glu-299, and Asn-301. Residues 410–549 (RDVRALAGVR…YSTYELEDEV (140 aa)) form an oligomerization domain region. Residues 550–933 (WPSQKPKVVI…AYYKAELGAG (384 aa)) are carbamoyl phosphate synthetic domain. Residues 674–866 (HALCQRLGIP…LAKLAALIAV (193 aa)) form the ATP-grasp 2 domain. Arg-710, Arg-750, Leu-752, Glu-757, Gly-782, Val-783, His-784, Ser-785, Gln-825, and Glu-837 together coordinate ATP. Positions 825, 837, and 839 each coordinate Mg(2+). Mn(2+)-binding residues include Gln-825, Glu-837, and Asn-839. The MGS-like domain occupies 934–1028 (QRLPLSGRVR…QDWHQKAPRG (95 aa)). Positions 934 to 1028 (QRLPLSGRVR…QDWHQKAPRG (95 aa)) are allosteric domain.

Belongs to the CarB family. As to quaternary structure, composed of two chains; the small (or glutamine) chain promotes the hydrolysis of glutamine to ammonia, which is used by the large (or ammonia) chain to synthesize carbamoyl phosphate. Tetramer of heterodimers (alpha,beta)4. Requires Mg(2+) as cofactor. Mn(2+) serves as cofactor.

It catalyses the reaction hydrogencarbonate + L-glutamine + 2 ATP + H2O = carbamoyl phosphate + L-glutamate + 2 ADP + phosphate + 2 H(+). The enzyme catalyses hydrogencarbonate + NH4(+) + 2 ATP = carbamoyl phosphate + 2 ADP + phosphate + 2 H(+). The protein operates within amino-acid biosynthesis; L-arginine biosynthesis; carbamoyl phosphate from bicarbonate: step 1/1. It functions in the pathway pyrimidine metabolism; UMP biosynthesis via de novo pathway; (S)-dihydroorotate from bicarbonate: step 1/3. Functionally, large subunit of the glutamine-dependent carbamoyl phosphate synthetase (CPSase). CPSase catalyzes the formation of carbamoyl phosphate from the ammonia moiety of glutamine, carbonate, and phosphate donated by ATP, constituting the first step of 2 biosynthetic pathways, one leading to arginine and/or urea and the other to pyrimidine nucleotides. The large subunit (synthetase) binds the substrates ammonia (free or transferred from glutamine from the small subunit), hydrogencarbonate and ATP and carries out an ATP-coupled ligase reaction, activating hydrogencarbonate by forming carboxy phosphate which reacts with ammonia to form carbamoyl phosphate. The protein is Carbamoyl phosphate synthase large chain of Thermus thermophilus (strain ATCC 27634 / DSM 579 / HB8).